We begin with the raw amino-acid sequence, 448 residues long: Adenylosuccinate synthetase (448 aa).

Residues 22–28 (GDEGKGK) and 50–52 (GHT) each bind GTP. Aspartate 23 (proton acceptor) is an active-site residue. Mg(2+)-binding residues include aspartate 23 and glycine 50. Residues 23–26 (DEGK), 48–51 (NAGH), threonine 139, arginine 153, glutamine 234, threonine 249, and arginine 321 each bind IMP. The active-site Proton donor is the histidine 51. 317 to 323 (SVTGRPR) contributes to the substrate binding site. Residues arginine 323, 349–351 (KLD), and 431–433 (STG) each bind GTP.

It belongs to the adenylosuccinate synthetase family. In terms of assembly, homodimer. Mg(2+) is required as a cofactor.

The protein localises to the cytoplasm. It catalyses the reaction IMP + L-aspartate + GTP = N(6)-(1,2-dicarboxyethyl)-AMP + GDP + phosphate + 2 H(+). The protein operates within purine metabolism; AMP biosynthesis via de novo pathway; AMP from IMP: step 1/2. Plays an important role in the de novo pathway of purine nucleotide biosynthesis. Catalyzes the first committed step in the biosynthesis of AMP from IMP. The sequence is that of Adenylosuccinate synthetase from Paraburkholderia phymatum (strain DSM 17167 / CIP 108236 / LMG 21445 / STM815) (Burkholderia phymatum).